We begin with the raw amino-acid sequence, 667 residues long: Probable potassium transport system protein Kup (667 aa).

Transmembrane regions (helical) follow at residues 16–36 (GFII…LYTM), 58–78 (VSLI…LIAL), 101–121 (WLII…ALTP), 146–166 (TNVI…QRFG), 167–187 (TGVI…VLGI), 221–241 (IFIL…YSDL), 253–273 (WPFV…WILA), 294–314 (VYLV…LISG), 343–363 (LYIP…VLYF), 373–393 (YGLA…YYLI), 399–419 (PLLA…FFLA), and 424–444 (FMHG…VMVI).

This sequence belongs to the HAK/KUP transporter (TC 2.A.72) family.

The protein localises to the cell membrane. It carries out the reaction K(+)(in) + H(+)(in) = K(+)(out) + H(+)(out). Functionally, transport of potassium into the cell. Likely operates as a K(+):H(+) symporter. This Streptococcus equi subsp. equi (strain 4047) protein is Probable potassium transport system protein Kup.